The primary structure comprises 631 residues: Extracellular metalloproteinase mep (631 aa).

The first 19 residues, 1–19 (MHGLRLVCSIGTLPLVILA), serve as a signal peptide directing secretion. A propeptide spanning residues 20-241 (YPAASLHTTS…VHGVVDYVAD (222 aa)) is cleaved from the precursor. 3 N-linked (GlcNAc...) asparagine glycosylation sites follow: Asn-282, Asn-332, and Asn-364. His-425 provides a ligand contact to Zn(2+). The active site involves Glu-426. Position 429 (His-429) interacts with Zn(2+). N-linked (GlcNAc...) asparagine glycosylation is found at Asn-470 and Asn-505.

It belongs to the peptidase M36 family. The cofactor is Zn(2+).

It localises to the secreted. Its function is as follows. Secreted metalloproteinase that allows assimilation of proteinaceous substrates. The chain is Extracellular metalloproteinase mep (mep) from Aspergillus niger (strain ATCC MYA-4892 / CBS 513.88 / FGSC A1513).